Consider the following 150-residue polypeptide: Flagellar assembly factor FliW (150 aa).

This sequence belongs to the FliW family. Interacts with translational regulator CsrA and flagellin(s).

Its subcellular location is the cytoplasm. In terms of biological role, acts as an anti-CsrA protein, binds CsrA and prevents it from repressing translation of its target genes, one of which is flagellin. Binds to flagellin and participates in the assembly of the flagellum. This is Flagellar assembly factor FliW from Leptospira borgpetersenii serovar Hardjo-bovis (strain L550).